The following is a 188-amino-acid chain: Ribosome maturation factor RimM (188 aa).

One can recognise a PRC barrel domain in the interval 93 to 175 (QDEFYFTDLI…EIEVQGDLSD (83 aa)).

The protein belongs to the RimM family. As to quaternary structure, binds ribosomal protein uS19.

The protein localises to the cytoplasm. Functionally, an accessory protein needed during the final step in the assembly of 30S ribosomal subunit, possibly for assembly of the head region. Essential for efficient processing of 16S rRNA. May be needed both before and after RbfA during the maturation of 16S rRNA. It has affinity for free ribosomal 30S subunits but not for 70S ribosomes. In Gluconacetobacter diazotrophicus (strain ATCC 49037 / DSM 5601 / CCUG 37298 / CIP 103539 / LMG 7603 / PAl5), this protein is Ribosome maturation factor RimM.